The primary structure comprises 287 residues: ATP phosphoribosyltransferase (287 aa).

This sequence belongs to the ATP phosphoribosyltransferase family. Long subfamily. As to quaternary structure, equilibrium between an active dimeric form, an inactive hexameric form and higher aggregates. Interconversion between the various forms is largely reversible and is influenced by the natural substrates and inhibitors of the enzyme. The cofactor is Mg(2+).

It is found in the cytoplasm. The catalysed reaction is 1-(5-phospho-beta-D-ribosyl)-ATP + diphosphate = 5-phospho-alpha-D-ribose 1-diphosphate + ATP. It functions in the pathway amino-acid biosynthesis; L-histidine biosynthesis; L-histidine from 5-phospho-alpha-D-ribose 1-diphosphate: step 1/9. With respect to regulation, feedback inhibited by histidine. Catalyzes the condensation of ATP and 5-phosphoribose 1-diphosphate to form N'-(5'-phosphoribosyl)-ATP (PR-ATP). Has a crucial role in the pathway because the rate of histidine biosynthesis seems to be controlled primarily by regulation of HisG enzymatic activity. The chain is ATP phosphoribosyltransferase (hisG) from Mycobacterium leprae (strain TN).